A 310-amino-acid chain; its full sequence is MDIVAHIQGDPGSSLTPLILIHAISGLALPYFALRPLSTDSDDGDSDKSRPVYGLSSPIFESVSAFRRHGKSLPSLALEYVRIIRREIQPRGPYLLGGWSMGGMLAIEMAAIFVAQGETVKHVVMIDSLNPEVYPPFQDSQEHQVLSTIMYNAIAWRVEGLEEACMPTLSDDASTTTSSDNSRASTDHGADSEVESEADLDDFMQQLREHVHQGMRMLASYHTLHRHIYLPDTAVTLIKCTMLGNLSPLLRASRKVFAKKNLLDPHNGWRTEQFRSFRSVPFASTHDACFDAEASEELTTILRGVLKDID.

Transmembrane regions (helical) follow at residues 14-34 and 95-115; these read SLTPLILIHAISGLALPYFAL and LLGGWSMGGMLAIEMAAIFVA. The segment at 168–195 is disordered; it reads TLSDDASTTTSSDNSRASTDHGADSEVE. Low complexity predominate over residues 170-184; it reads SDDASTTTSSDNSRA.

It belongs to the AMT4 thioesterase family.

It is found in the membrane. It functions in the pathway secondary metabolite biosynthesis. Its function is as follows. Thioesterase; part of the gene cluster that mediates the biosynthesis of pyranterreones, a family of antioxidative compounds. The first step of pyranonigrins biosynthesis is performed by the hybrid PKS-NRPS synthetase pytA that condenses 4 malonyl-CoA units ato the acetyl starter unit by the modular PKS of pytA. The acyl chain is then connected to an L-serine through the amide bond by the modular NRPS of pytA. A tetramic acid is formed and released from the PKS-NRPS pytA to give pyranterreone 5 with the help of the thioesterase pytI. Pyranterreone 5 could be methylated by pytC to afford pyranterreone 6. Both pyranterreones 5 and 6 are subsequently oxidized by the FAD-linked oxidoreductase pytB and the cytochrome P450 monooxygenase pytD to form the fused gamma-pyrone core, resulting in pyranterreones 7 and 11, respectively. The hydroxy group at C-8 of pyranterreones 7 and 11 are dehydrated by the aspartyl protease pytH to form a delta-7 double bond to give pyranterreones 3 and 1, 2 accordingly. The exo-methylene of pyranterreone 3 could be reduced into a pendant methyl by reductase pytE to provide pyranterreone 4, also known as cordylactam. Pyranterreone 4 can be reconverted to pyranterreone 3 through pytB-catalyzed dehydrogenation or further oxidized to pyranterreones 9 and 10. This is Thioesterase pytI from Aspergillus terreus.